A 113-amino-acid polypeptide reads, in one-letter code: Integration host factor subunit alpha (113 aa).

2 disordered regions span residues 59–80 (GNFQ…GETI) and 94–113 (QKLK…ASAE). Pro residues predominate over residues 104–113 (NSPPDPASAE).

The protein belongs to the bacterial histone-like protein family. Heterodimer of an alpha and a beta chain.

This protein is one of the two subunits of integration host factor, a specific DNA-binding protein that functions in genetic recombination as well as in transcriptional and translational control. The polypeptide is Integration host factor subunit alpha (Bordetella pertussis (strain Tohama I / ATCC BAA-589 / NCTC 13251)).